A 78-amino-acid polypeptide reads, in one-letter code: Ubiquinol-cytochrome-c reductase complex assembly factor 3 (78 aa).

At 1 to 5 the chain is on the mitochondrial matrix side; that stretch reads MSGMR. The helical transmembrane segment at 6 to 26 threads the bilayer; it reads ILTGSVALGGLTYAIWIIFSP. Topologically, residues 27–78 are mitochondrial intermembrane; sequence GEERKKEILKSLPEANPVRMEETRKRNAIMLQVLKDAAETNDNIARGFGSQK.

The protein belongs to the UQCC3 family. In terms of assembly, associates with the ubiquinol-cytochrome c reductase complex (mitochondrial respiratory chain complex III or cytochrome b-c1 complex).

It localises to the mitochondrion inner membrane. Functionally, required for the assembly of the ubiquinol-cytochrome c reductase complex (mitochondrial respiratory chain complex III or cytochrome b-c1 complex), mediating cytochrome b recruitment and probably stabilization within the complex. Thereby, plays an important role in ATP production by mitochondria. Cardiolipin-binding protein, it may also control the cardiolipin composition of mitochondria membranes and their morphology. The sequence is that of Ubiquinol-cytochrome-c reductase complex assembly factor 3 from Danio rerio (Zebrafish).